We begin with the raw amino-acid sequence, 156 residues long: Small ribosomal subunit protein uS7 (156 aa).

It belongs to the universal ribosomal protein uS7 family. Part of the 30S ribosomal subunit. Contacts proteins S9 and S11.

In terms of biological role, one of the primary rRNA binding proteins, it binds directly to 16S rRNA where it nucleates assembly of the head domain of the 30S subunit. Is located at the subunit interface close to the decoding center, probably blocks exit of the E-site tRNA. This Photobacterium profundum (strain SS9) protein is Small ribosomal subunit protein uS7.